Consider the following 359-residue polypeptide: 3-isopropylmalate dehydrogenase (359 aa).

Residues Arg96, Arg106, Arg134, and Asp223 each contribute to the substrate site. Mg(2+)-binding residues include Asp223, Asp247, and Asp251. Position 281 to 293 (Gly281 to Asn293) interacts with NAD(+).

The protein belongs to the isocitrate and isopropylmalate dehydrogenases family. LeuB type 1 subfamily. Homodimer. Mg(2+) serves as cofactor. Requires Mn(2+) as cofactor.

The protein resides in the cytoplasm. The enzyme catalyses (2R,3S)-3-isopropylmalate + NAD(+) = 4-methyl-2-oxopentanoate + CO2 + NADH. The protein operates within amino-acid biosynthesis; L-leucine biosynthesis; L-leucine from 3-methyl-2-oxobutanoate: step 3/4. In terms of biological role, catalyzes the oxidation of 3-carboxy-2-hydroxy-4-methylpentanoate (3-isopropylmalate) to 3-carboxy-4-methyl-2-oxopentanoate. The product decarboxylates to 4-methyl-2 oxopentanoate. The protein is 3-isopropylmalate dehydrogenase of Chromohalobacter salexigens (strain ATCC BAA-138 / DSM 3043 / CIP 106854 / NCIMB 13768 / 1H11).